Consider the following 194-residue polypeptide: Leucyl/phenylalanyl-tRNA--protein transferase (194 aa).

The protein belongs to the L/F-transferase family.

The protein resides in the cytoplasm. The enzyme catalyses N-terminal L-lysyl-[protein] + L-leucyl-tRNA(Leu) = N-terminal L-leucyl-L-lysyl-[protein] + tRNA(Leu) + H(+). It carries out the reaction N-terminal L-arginyl-[protein] + L-leucyl-tRNA(Leu) = N-terminal L-leucyl-L-arginyl-[protein] + tRNA(Leu) + H(+). The catalysed reaction is L-phenylalanyl-tRNA(Phe) + an N-terminal L-alpha-aminoacyl-[protein] = an N-terminal L-phenylalanyl-L-alpha-aminoacyl-[protein] + tRNA(Phe). In terms of biological role, functions in the N-end rule pathway of protein degradation where it conjugates Leu, Phe and, less efficiently, Met from aminoacyl-tRNAs to the N-termini of proteins containing an N-terminal arginine or lysine. This Chlorobium luteolum (strain DSM 273 / BCRC 81028 / 2530) (Pelodictyon luteolum) protein is Leucyl/phenylalanyl-tRNA--protein transferase.